The chain runs to 710 residues: E3 ubiquitin-protein ligase TRIM9 (710 aa).

The RING-type zinc-finger motif lies at 10–50 (CPVCGSFYREPIILPCSHNLCQACARNILVQTPESESPQSH). Residue T41 is modified to Phosphothreonine. A phosphoserine mark is found at S44, S46, and S49. 2 consecutive B box-type zinc fingers follow at residues 163 to 212 (AAAL…LVPP) and 224 to 266 (RKVS…VKAL). Positions 168, 171, 193, 198, 229, 232, 252, and 258 each coordinate Zn(2+). Residues 273–340 (HKSQLSQALN…KAQLLARVNK (68 aa)) adopt a coiled-coil conformation. The region spanning 374–432 (IKENDPSGFLQISDALIRRVHLTEDQWGKGTLTPRMTTDFDLSLDNSPLLQSIHQLDFV) is the COS domain. A Fibronectin type-III domain is found at 440-535 (VPATPILQLE…KTLVLQTSEV (96 aa)). The 170-residue stretch at 533-702 (SEVAWFAFDP…LHTGLPVPDF (170 aa)) folds into the B30.2/SPRY domain.

Belongs to the TRIM/RBCC family. As to quaternary structure, interacts with SNAP25. Post-translationally, auto-ubiquitinated. Poly-ubiquitinated in cultured cells, whereas it is monoubiquitinated in vitro. In terms of tissue distribution, brain. Highly expressed in the cerebral cortex (at protein level). Severely decreased in the affected brain areas in Parkinson disease and dementia with Lewy bodies.

It is found in the cytoplasm. It localises to the cell projection. The protein resides in the dendrite. Its subcellular location is the cytoplasmic vesicle. The protein localises to the secretory vesicle. It is found in the synaptic vesicle. It localises to the synapse. The protein resides in the cytoskeleton. The enzyme catalyses S-ubiquitinyl-[E2 ubiquitin-conjugating enzyme]-L-cysteine + [acceptor protein]-L-lysine = [E2 ubiquitin-conjugating enzyme]-L-cysteine + N(6)-ubiquitinyl-[acceptor protein]-L-lysine.. It functions in the pathway protein modification; protein ubiquitination. Functionally, E3 ubiquitin-protein ligase which ubiquitinates itself in cooperation with an E2 enzyme UBE2D2/UBC4 and serves as a targeting signal for proteasomal degradation. May play a role in regulation of neuronal functions and may also participate in the formation or breakdown of abnormal inclusions in neurodegenerative disorders. May act as a regulator of synaptic vesicle exocytosis by controlling the availability of SNAP25 for the SNARE complex formation. This is E3 ubiquitin-protein ligase TRIM9 (TRIM9) from Homo sapiens (Human).